A 436-amino-acid polypeptide reads, in one-letter code: GTPase Der (436 aa).

EngA-type G domains are found at residues 4-167 and 175-351; these read PTVA…PTEV and IRFS…ESQN. Residues 10–17, 57–61, 119–122, 181–188, 229–233, and 294–297 contribute to the GTP site; these read GRPNVGKS, DTGGI, NKVD, DTAGM, and NKWD. The region spanning 352 to 436 is the KH-like domain; it reads RRISSAVLND…PIHLIARKRK (85 aa).

Belongs to the TRAFAC class TrmE-Era-EngA-EngB-Septin-like GTPase superfamily. EngA (Der) GTPase family. Associates with the 50S ribosomal subunit.

In terms of biological role, GTPase that plays an essential role in the late steps of ribosome biogenesis. This is GTPase Der from Streptococcus thermophilus (strain CNRZ 1066).